Reading from the N-terminus, the 122-residue chain is Large ribosomal subunit protein uL14 (122 aa).

It belongs to the universal ribosomal protein uL14 family. Part of the 50S ribosomal subunit. Forms a cluster with proteins L3 and L19. In the 70S ribosome, L14 and L19 interact and together make contacts with the 16S rRNA in bridges B5 and B8.

Its function is as follows. Binds to 23S rRNA. Forms part of two intersubunit bridges in the 70S ribosome. The polypeptide is Large ribosomal subunit protein uL14 (Nocardioides sp. (strain ATCC BAA-499 / JS614)).